Consider the following 124-residue polypeptide: Small ribosomal subunit protein bS6 (124 aa).

Residues Glu-96–Ala-124 are disordered. Over residues Ala-114–Ala-124 the composition is skewed to low complexity.

The protein belongs to the bacterial ribosomal protein bS6 family.

Functionally, binds together with bS18 to 16S ribosomal RNA. The polypeptide is Small ribosomal subunit protein bS6 (Burkholderia orbicola (strain MC0-3)).